Here is a 301-residue protein sequence, read N- to C-terminus: D-psicose 3-epimerase (301 aa).

Tyrosine 16 serves as a coordination point for substrate. The active-site Proton donor/acceptor is the glutamate 162. Mn(2+) is bound at residue glutamate 162. Substrate-binding positions include glutamate 168 and 195–198 (DTFH). Positions 195 and 221 each coordinate Mn(2+). Arginine 227 contacts substrate. The Proton donor/acceptor role is filled by glutamate 256. Position 256 (glutamate 256) interacts with Mn(2+).

It belongs to the hyi family. In terms of assembly, homotetramer. Requires Mn(2+) as cofactor. Co(2+) serves as cofactor.

It catalyses the reaction D-allulose = keto-D-fructose. Completely inhibited by EDTA and partially inhibited by Zn(2+), Mg(2+) and Cu(2+). Its function is as follows. Involved in the biosynthesis of D-psicose. Catalyzes the reversible epimerization of D-fructose at the C3 position to yield D-psicose. The enzyme is highly specific for D-psicose and shows very low activity with D-tagatose. The chain is D-psicose 3-epimerase from Enterocloster bolteae (strain ATCC BAA-613 / DSM 15670 / CCUG 46953 / JCM 12243 / WAL 16351) (Clostridium bolteae).